The chain runs to 181 residues: Shikimate kinase 2 (181 aa).

12–17 (GCGKTT) is a binding site for ATP. Residues T16 and D32 each coordinate Mg(2+). Residues D34, R58, and G79 each contribute to the substrate site. The tract at residues 112 to 126 (EAEPEADLRPTLTGK) is LID domain. An ATP-binding site is contributed by R120. Position 139 (R139) interacts with substrate.

It belongs to the shikimate kinase family. AroL subfamily. In terms of assembly, monomer. The cofactor is Mg(2+).

The protein resides in the cytoplasm. The catalysed reaction is shikimate + ATP = 3-phosphoshikimate + ADP + H(+). It participates in metabolic intermediate biosynthesis; chorismate biosynthesis; chorismate from D-erythrose 4-phosphate and phosphoenolpyruvate: step 5/7. Catalyzes the specific phosphorylation of the 3-hydroxyl group of shikimic acid using ATP as a cosubstrate. The chain is Shikimate kinase 2 from Salmonella dublin (strain CT_02021853).